Here is a 766-residue protein sequence, read N- to C-terminus: Ent-copalyl diphosphate synthase 3 (766 aa).

Residues 1 to 30 (FRSTAAGRCLPVTCCVFPRHFRVSSSSILP) constitute a chloroplast transit peptide. Residue lysine 222 participates in substrate binding. Aspartate 354 and aspartate 356 together coordinate Mg(2+). A DXDD motif motif is present at residues 354 to 357 (DVDD). Lysine 440 lines the substrate pocket.

The protein belongs to the terpene synthase family. Tpsc subfamily. The cofactor is Mg(2+). As to expression, accumulates in leaves, and, at low levels, in germinating seeds.

Its subcellular location is the plastid. The protein resides in the chloroplast. The catalysed reaction is (2E,6E,10E)-geranylgeranyl diphosphate = ent-copalyl diphosphate. It functions in the pathway plant hormone biosynthesis; gibberellin biosynthesis. The protein operates within secondary metabolite biosynthesis; terpenoid biosynthesis. In terms of biological role, involved in the biosynthesis of ent-kaurene diterpenoids natural products such as oridonin, miltiradiene, eriocalyxin B and nezukol, known to exhibit antitumor, anti-inflammatory and antibacterial activities, and in the production of gibberellins phytohormones. Catalyzes the conversion of (2E,6E,10E)-geranylgeranyl diphosphate (GGPP) to ent-copalyl diphosphate (ent-CPP). In Isodon eriocalyx (Plectranthus eriocalyx), this protein is Ent-copalyl diphosphate synthase 3.